A 408-amino-acid chain; its full sequence is Succinylornithine transaminase (408 aa).

Residue Lys-252 is modified to N6-(pyridoxal phosphate)lysine.

The protein belongs to the class-III pyridoxal-phosphate-dependent aminotransferase family. AstC subfamily. The cofactor is pyridoxal 5'-phosphate.

The enzyme catalyses N(2)-succinyl-L-ornithine + 2-oxoglutarate = N-succinyl-L-glutamate 5-semialdehyde + L-glutamate. It functions in the pathway amino-acid degradation; L-arginine degradation via AST pathway; L-glutamate and succinate from L-arginine: step 3/5. Functionally, catalyzes the transamination of N(2)-succinylornithine and alpha-ketoglutarate into N(2)-succinylglutamate semialdehyde and glutamate. Can also act as an acetylornithine aminotransferase. The protein is Succinylornithine transaminase of Salmonella paratyphi B (strain ATCC BAA-1250 / SPB7).